We begin with the raw amino-acid sequence, 447 residues long: MKGYEVNFDGLVGPTHHYAGLSFGNEASTKNRNNLSNPKLAAKQGLLKMKALADMGMKQGVLAPHERPHVPMLRRLGFTGDDISVVAQAMRYSPELLSSLSSASPMWTANAATVSPSADSQDERVHFTAANLNNKFHRSIEAETTSQVLQAIFKNERHFVHHEALPQVALFGDEGAANHNRLGGDYAKRGIQVFVYGQQHLNNGLPGPKRYPARQTREASEAIARLHRLDDAHTVFVQQNPDVIDQGVFHNDVIAVSNQQVLFHHQHAFLNQDQAFAEIRQKMASIGEDFISIEVPENRVTVDDAVATYLFNSQILTRPDGGMTIVVPEESRQNAAVWSYLNDMIQMGTPIDAIQVYDLRESMRNGGGPACLRLRVALNETELNAVNPKVLMNDQLFMTLNQWVDKHYRDRLAQEDLADPHLLMESRMALDELTKILGLGSVYPFQK.

Substrate is bound by residues 19-28, Asn-110, and 137-138; these read AGLSFGNEAS and HR. Glu-174 is a catalytic residue. Arg-214 contributes to the substrate binding site. The active site involves His-250. Substrate-binding residues include Asp-252 and Asn-365. Cys-371 (nucleophile) is an active-site residue.

This sequence belongs to the succinylarginine dihydrolase family. As to quaternary structure, homodimer.

It carries out the reaction N(2)-succinyl-L-arginine + 2 H2O + 2 H(+) = N(2)-succinyl-L-ornithine + 2 NH4(+) + CO2. The protein operates within amino-acid degradation; L-arginine degradation via AST pathway; L-glutamate and succinate from L-arginine: step 2/5. Functionally, catalyzes the hydrolysis of N(2)-succinylarginine into N(2)-succinylornithine, ammonia and CO(2). In Acinetobacter baumannii (strain ACICU), this protein is N-succinylarginine dihydrolase.